Here is a 419-residue protein sequence, read N- to C-terminus: Transcription regulator lscL (419 aa).

Positions 12–35 (RIRKVKCDEKKPCCQKCIDTGRTC) form a DNA-binding region, zn(2)-C6 fungal-type.

It localises to the nucleus. Its function is as follows. Transcription factor that may coregulate the expression of the gene cluster that mediates the biosynthesis of the lipopeptide antibiotics leucinostatins that show extensive biological activities, including antimalarial, antiviral, antibacterial, antifungal, and antitumor activities, as well as phytotoxic. The chain is Transcription regulator lscL from Purpureocillium lilacinum (Paecilomyces lilacinus).